The chain runs to 585 residues: Probable ubiquitin carboxyl-terminal hydrolase 9 (585 aa).

Positions 1–23 (MSLLRWMGMNSPGSTDRRKSTWE) are disordered. A USP domain is found at 41–424 (YGLTNYGNTC…TAYVLFYTAA (384 aa)). The Nucleophile role is filled by Cys50. The segment at 85–110 (CTKTNHPESSSSRHSKKKSMENRKSS) is disordered. The active-site Proton acceptor is His375. Positions 447–470 (SQLKQESVEVSNLSSTPRSNSTIT) are enriched in polar residues. Positions 447-473 (SQLKQESVEVSNLSSTPRSNSTITYPD) are disordered. At Ser505 the chain carries Phosphoserine. Disordered stretches follow at residues 511–530 (FHSR…SRSF) and 540–585 (KFFG…RSKR). A compositionally biased stretch (polar residues) spans 542-551 (FGSSQSNSPK). A Phosphoserine modification is found at Ser549. Positions 553–570 (SPLRDTHKSSDEHSESKH) are enriched in basic and acidic residues. The span at 574–585 (LPWQFSRSRSKR) shows a compositional bias: polar residues.

It belongs to the peptidase C19 family. In terms of assembly, interacts with bun107 and bun62.

It localises to the nucleus. The protein resides in the cytoplasm. Its subcellular location is the cell tip. It catalyses the reaction Thiol-dependent hydrolysis of ester, thioester, amide, peptide and isopeptide bonds formed by the C-terminal Gly of ubiquitin (a 76-residue protein attached to proteins as an intracellular targeting signal).. Functionally, ubiquitin C-terminal hydrolase involved in regulating actin dynamics and/or endocytosis at cell tips and septa. The chain is Probable ubiquitin carboxyl-terminal hydrolase 9 (ubp9) from Schizosaccharomyces pombe (strain 972 / ATCC 24843) (Fission yeast).